The following is a 344-amino-acid chain: Cyclin-G2 (344 aa).

Residues 298 to 324 are disordered; that stretch reads CFDGSESEDSGEDMSCGEESLSSSPPS. Acidic residues predominate over residues 302-313; sequence SESEDSGEDMSC.

It belongs to the cyclin family. Cyclin G subfamily. As to expression, highest levels in intestine. Intermediate levels in spleen, brain and kidney. Low levels in testis, stomach, pancreas, liver, salivary gland and muscle. According to PubMed:9139721 also abundant in thymus.

The protein localises to the cytoplasm. The protein resides in the nucleus. May play a role in growth regulation and in negative regulation of cell cycle progression. This is Cyclin-G2 (Ccng2) from Mus musculus (Mouse).